The following is a 107-amino-acid chain: UPF0145 protein ETA_21660 (107 aa).

It belongs to the UPF0145 family.

In Erwinia tasmaniensis (strain DSM 17950 / CFBP 7177 / CIP 109463 / NCPPB 4357 / Et1/99), this protein is UPF0145 protein ETA_21660.